A 1028-amino-acid chain; its full sequence is Pro-apoptotic serine protease nma111 (1028 aa).

The disordered stretch occupies residues 1–46 (MDLNGETSTKRKRSSVAAPAERPAKHLKPGNSTLTPGDATPANGTV). Residues 82–266 (VVSIHFCQTC…AATDYFLPLD (185 aa)) are serine protease. Residues H120, D151, and S233 each act as charge relay system in the active site. PDZ domains lie at 289–374 (QWIL…LLVQ) and 876–957 (VFCG…VTFD). Residues 991 to 1001 (SHERDRHKDGI) show a composition bias toward basic and acidic residues. The tract at residues 991–1028 (SHERDRHKDGITPDAANLNPDAMDEVYEEVSDVEPEVD) is disordered. A compositionally biased stretch (acidic residues) spans 1012-1028 (AMDEVYEEVSDVEPEVD).

Belongs to the peptidase S1C family.

The protein resides in the nucleus. Nuclear serine protease which mediates apoptosis. This chain is Pro-apoptotic serine protease nma111 (nma111), found in Aspergillus fumigatus (strain ATCC MYA-4609 / CBS 101355 / FGSC A1100 / Af293) (Neosartorya fumigata).